The following is a 247-amino-acid chain: 4-hydroxy-tetrahydrodipicolinate reductase (247 aa).

NAD(+) contacts are provided by residues 9-14 (GAAGRM), 76-78 (GTT), and 103-106 (APNF). His133 serves as the catalytic Proton donor/acceptor. Residue His134 coordinates (S)-2,3,4,5-tetrahydrodipicolinate. The Proton donor role is filled by Lys137. 143–144 (GT) lines the (S)-2,3,4,5-tetrahydrodipicolinate pocket.

Belongs to the DapB family.

The protein localises to the cytoplasm. It carries out the reaction (S)-2,3,4,5-tetrahydrodipicolinate + NAD(+) + H2O = (2S,4S)-4-hydroxy-2,3,4,5-tetrahydrodipicolinate + NADH + H(+). The catalysed reaction is (S)-2,3,4,5-tetrahydrodipicolinate + NADP(+) + H2O = (2S,4S)-4-hydroxy-2,3,4,5-tetrahydrodipicolinate + NADPH + H(+). It functions in the pathway amino-acid biosynthesis; L-lysine biosynthesis via DAP pathway; (S)-tetrahydrodipicolinate from L-aspartate: step 4/4. Functionally, catalyzes the conversion of 4-hydroxy-tetrahydrodipicolinate (HTPA) to tetrahydrodipicolinate. This Beutenbergia cavernae (strain ATCC BAA-8 / DSM 12333 / CCUG 43141 / JCM 11478 / NBRC 16432 / NCIMB 13614 / HKI 0122) protein is 4-hydroxy-tetrahydrodipicolinate reductase.